Here is a 518-residue protein sequence, read N- to C-terminus: Sensor protein kinase HptS (518 aa).

The next 2 helical transmembrane spans lie at 20–40 and 222–242; these read IFPV…IYIW and GITL…FGFI. The 217-residue stretch at 297–513 folds into the Histidine kinase domain; that stretch reads EQLIHSIEHT…LICYKIPLSR (217 aa). H325 carries the post-translational modification Phosphohistidine; by autocatalysis.

Post-translationally, autophosphorylated.

The protein resides in the cell membrane. The enzyme catalyses ATP + protein L-histidine = ADP + protein N-phospho-L-histidine.. Its function is as follows. Member of the two-component regulatory system HptS/HptR that regulates genes involved in hexose phosphate transport system in response to changes in extracellular phosphate sources. May act as a sensor protein kinase which is autophosphorylated at a histidine residue and transfers its phosphate group to the conserved aspartic acid residue in the regulatory domain of HptS. In turn, HptS antagonizes CcpA-dependent transcription of a subset of CcpA-regulated genes involved in antibiotic susceptibility. The polypeptide is Sensor protein kinase HptS (hptS) (Staphylococcus aureus (strain bovine RF122 / ET3-1)).